The primary structure comprises 95 residues: MSVDAATVRRIAHLARIAVTDDEVPHLQGELNAMLAFVEQLAEVDVDGVEPMTSVTPMQMKKRADGVNDGEIADHVVANAPATEDHFFLVPKVVE.

It belongs to the GatC family. Heterotrimer of A, B and C subunits.

The catalysed reaction is L-glutamyl-tRNA(Gln) + L-glutamine + ATP + H2O = L-glutaminyl-tRNA(Gln) + L-glutamate + ADP + phosphate + H(+). It catalyses the reaction L-aspartyl-tRNA(Asn) + L-glutamine + ATP + H2O = L-asparaginyl-tRNA(Asn) + L-glutamate + ADP + phosphate + 2 H(+). Its function is as follows. Allows the formation of correctly charged Asn-tRNA(Asn) or Gln-tRNA(Gln) through the transamidation of misacylated Asp-tRNA(Asn) or Glu-tRNA(Gln) in organisms which lack either or both of asparaginyl-tRNA or glutaminyl-tRNA synthetases. The reaction takes place in the presence of glutamine and ATP through an activated phospho-Asp-tRNA(Asn) or phospho-Glu-tRNA(Gln). The chain is Aspartyl/glutamyl-tRNA(Asn/Gln) amidotransferase subunit C from Rhodopseudomonas palustris (strain BisB5).